We begin with the raw amino-acid sequence, 188 residues long: Large ribosomal subunit protein uL5 (188 aa).

It belongs to the universal ribosomal protein uL5 family. As to quaternary structure, part of the 50S ribosomal subunit; contacts the 5S rRNA and probably tRNA. Forms a bridge to the 30S subunit in the 70S ribosome.

This is one of the proteins that bind and probably mediate the attachment of the 5S RNA into the large ribosomal subunit, where it forms part of the central protuberance. In the 70S ribosome it contacts protein S13 of the 30S subunit (bridge B1b), connecting the 2 subunits; this bridge is implicated in subunit movement. May contact the P site tRNA; the 5S rRNA and some of its associated proteins might help stabilize positioning of ribosome-bound tRNAs. This Pyrococcus abyssi (strain GE5 / Orsay) protein is Large ribosomal subunit protein uL5.